A 526-amino-acid chain; its full sequence is Rho guanine nucleotide exchange factor 3 (526 aa).

The tract at residues 20-40 (ELPPASGPAKDAEEPSNKRVK) is disordered. Serine 47 and serine 70 each carry phosphoserine. The DH domain occupies 122–304 (KRQEAIFELS…QGIVAEINTK (183 aa)). The region spanning 291–449 (INIIQGIVAE…WLNCIRQAKE (159 aa)) is the PH domain. Residues 464–526 (EGSFLNPTTG…GNSRHGESNV (63 aa)) are disordered. The span at 466-475 (SFLNPTTGSR) shows a compositional bias: polar residues.

In terms of assembly, interacts with RHOA and RHOB. Widely expressed. Highest levels are found in adult brain and skeletal muscle. Lower levels are found in heart and kidney.

Its subcellular location is the cytoplasm. Acts as a guanine nucleotide exchange factor (GEF) for RhoA and RhoB GTPases. This is Rho guanine nucleotide exchange factor 3 (ARHGEF3) from Homo sapiens (Human).